The sequence spans 364 residues: Suberization-associated anionic peroxidase 1 (364 aa).

The first 25 residues, 1 to 25, serve as a signal peptide directing secretion; sequence MGFRLSHLSLALSFVALALAGVAIY. N-linked (GlcNAc...) asparagine glycosylation occurs at asparagine 36. 2 disulfides stabilise this stretch: cysteine 81-cysteine 160 and cysteine 112-cysteine 117. Histidine 110 functions as the Proton acceptor in the catalytic mechanism. Ca(2+) contacts are provided by aspartate 111, valine 114, glycine 116, and aspartate 118. Residues asparagine 127, asparagine 162, and asparagine 200 are each glycosylated (N-linked (GlcNAc...) asparagine). 2 disulfide bridges follow: cysteine 167/cysteine 353 and cysteine 246/cysteine 265. Proline 209 is a substrate binding site. Residues asparagine 214 and asparagine 226 are each glycosylated (N-linked (GlcNAc...) asparagine). Histidine 239 serves as a coordination point for heme b. Threonine 240 contacts Ca(2+). Residue asparagine 264 is glycosylated (N-linked (GlcNAc...) asparagine). Ca(2+)-binding residues include aspartate 278, threonine 280, and aspartate 285.

It belongs to the peroxidase family. Classical plant (class III) peroxidase subfamily. Ca(2+) serves as cofactor. The cofactor is heme b.

It is found in the secreted. It catalyses the reaction 2 a phenolic donor + H2O2 = 2 a phenolic radical donor + 2 H2O. In terms of biological role, removal of H(2)O(2), oxidation of toxic reductants, biosynthesis and degradation of lignin, suberization, auxin catabolism, response to environmental stresses such as wounding, pathogen attack and oxidative stress. These functions might be dependent on each isozyme/isoform in each plant tissue. Its function is as follows. Suggested to catalyze the deposition of the aromatic residues of suberin on the cell wall and thus play a role in cell-suberization. In Solanum lycopersicum (Tomato), this protein is Suberization-associated anionic peroxidase 1 (TAP1).